The sequence spans 428 residues: GTPase HflX (428 aa).

Residues 214–374 (PVVAIVGYTN…AIERELFKET (161 aa)) form the Hflx-type G domain. GTP is bound by residues 220–227 (GYTNAGKS), 245–249 (FATLD), 267–270 (DTVG), 333–336 (NKID), and 352–354 (SAK). Positions 227 and 247 each coordinate Mg(2+).

This sequence belongs to the TRAFAC class OBG-HflX-like GTPase superfamily. HflX GTPase family. In terms of assembly, monomer. Associates with the 50S ribosomal subunit. Requires Mg(2+) as cofactor.

It is found in the cytoplasm. In terms of biological role, GTPase that associates with the 50S ribosomal subunit and may have a role during protein synthesis or ribosome biogenesis. This is GTPase HflX from Caldanaerobacter subterraneus subsp. tengcongensis (strain DSM 15242 / JCM 11007 / NBRC 100824 / MB4) (Thermoanaerobacter tengcongensis).